Reading from the N-terminus, the 267-residue chain is Ribosomal RNA small subunit methyltransferase A (267 aa).

Positions 16, 18, 43, 64, 88, and 109 each coordinate S-adenosyl-L-methionine.

The protein belongs to the class I-like SAM-binding methyltransferase superfamily. rRNA adenine N(6)-methyltransferase family. RsmA subfamily.

It localises to the cytoplasm. It carries out the reaction adenosine(1518)/adenosine(1519) in 16S rRNA + 4 S-adenosyl-L-methionine = N(6)-dimethyladenosine(1518)/N(6)-dimethyladenosine(1519) in 16S rRNA + 4 S-adenosyl-L-homocysteine + 4 H(+). Its function is as follows. Specifically dimethylates two adjacent adenosines (A1518 and A1519) in the loop of a conserved hairpin near the 3'-end of 16S rRNA in the 30S particle. May play a critical role in biogenesis of 30S subunits. This Acidithiobacillus ferrooxidans (strain ATCC 23270 / DSM 14882 / CIP 104768 / NCIMB 8455) (Ferrobacillus ferrooxidans (strain ATCC 23270)) protein is Ribosomal RNA small subunit methyltransferase A.